A 128-amino-acid polypeptide reads, in one-letter code: RutC family protein BU371 (128 aa).

It belongs to the RutC family.

The polypeptide is RutC family protein BU371 (Buchnera aphidicola subsp. Acyrthosiphon pisum (strain APS) (Acyrthosiphon pisum symbiotic bacterium)).